Consider the following 391-residue polypeptide: F-box protein At2g34280 (391 aa).

The F-box domain maps to 1–43; that stretch reads MDLLPYDVVEHILERLDVKSLLNCKSVSKQWRSTIRCRAFQER.

The protein is F-box protein At2g34280 of Arabidopsis thaliana (Mouse-ear cress).